Reading from the N-terminus, the 539-residue chain is Chitin deacetylase 1 (539 aa).

Residues 1–23 form the signal peptide; it reads MARYARVATLAACLLFACALADG. The region spanning 42–104 is the Chitin-binding type-2 domain; sequence QELCKDKDAG…WKDAVKNCKL (63 aa). Cystine bridges form between cysteine 80–cysteine 93, cysteine 122–cysteine 134, cysteine 129–cysteine 147, cysteine 141–cysteine 156, cysteine 168–cysteine 180, and cysteine 173–cysteine 178. Residues 121–157 form the LDL-receptor class A domain; it reads LCQDGFLACGDSTCIERGLFCNGEKDCGDGSDENSCD. Aspartate 206 lines the Zn(2+) pocket. Intrachain disulfides connect cysteine 230/cysteine 489, cysteine 354/cysteine 361, cysteine 391/cysteine 397, cysteine 497/cysteine 520, and cysteine 503/cysteine 523. Asparagine 244 is a glycosylation site (N-linked (GlcNAc...) asparagine). Zn(2+) contacts are provided by histidine 261 and histidine 265. An N-linked (GlcNAc...) asparagine glycan is attached at asparagine 296.

This sequence belongs to the carbohydrate esterase 4 (CE4) family. As to quaternary structure, interacts with CPAP3-A1. Zn(2+) is required as a cofactor. As to expression, highly expressed in epidermis and head. Moderate expression levels in fat body, Malpighian tubule, testis and midgut. Low expression in silk gland and ovary.

The protein localises to the secreted. It catalyses the reaction [(1-&gt;4)-N-acetyl-beta-D-glucosaminyl](n) + n H2O = chitosan + n acetate. Its activity is regulated as follows. Binding to the accessory protein CPAP3-A1 is essential for chitinase activity. Hydrolyzes the N-acetamido groups of N-acetyl-D-glucosamine residues in chitin. This Bombyx mori (Silk moth) protein is Chitin deacetylase 1.